We begin with the raw amino-acid sequence, 630 residues long: Chaperone protein HtpG (630 aa).

An a; substrate-binding region spans residues 1 to 336 (MTTTVEQTAE…TADLPLNVSR (336 aa)). The segment at 337 to 551 (EMIQESPILA…EDGYDRQMEK (215 aa)) is b. The interval 552–630 (ILQNAGRLQG…VFERSVRSEG (79 aa)) is c.

Belongs to the heat shock protein 90 family. Homodimer.

The protein resides in the cytoplasm. Molecular chaperone. Has ATPase activity. In Rhizobium etli (strain ATCC 51251 / DSM 11541 / JCM 21823 / NBRC 15573 / CFN 42), this protein is Chaperone protein HtpG.